Consider the following 94-residue polypeptide: UPF0381 protein YfcZ (94 aa).

It belongs to the UPF0381 family.

This chain is UPF0381 protein YfcZ (yfcZ), found in Escherichia coli O6:H1 (strain CFT073 / ATCC 700928 / UPEC).